A 209-amino-acid chain; its full sequence is Large ribosomal subunit protein uL3 (209 aa).

The interval 126–148 (HGQSRGPMAHGSRYHRRPGSMGP) is disordered.

The protein belongs to the universal ribosomal protein uL3 family. As to quaternary structure, part of the 50S ribosomal subunit. Forms a cluster with proteins L14 and L19.

One of the primary rRNA binding proteins, it binds directly near the 3'-end of the 23S rRNA, where it nucleates assembly of the 50S subunit. This Listeria monocytogenes serotype 4b (strain CLIP80459) protein is Large ribosomal subunit protein uL3.